The chain runs to 118 residues: Holo-[acyl-carrier-protein] synthase (118 aa).

Mg(2+) is bound by residues Asp8 and Glu58.

Belongs to the P-Pant transferase superfamily. AcpS family. It depends on Mg(2+) as a cofactor.

It is found in the cytoplasm. It carries out the reaction apo-[ACP] + CoA = holo-[ACP] + adenosine 3',5'-bisphosphate + H(+). In terms of biological role, transfers the 4'-phosphopantetheine moiety from coenzyme A to a Ser of acyl-carrier-protein. The sequence is that of Holo-[acyl-carrier-protein] synthase from Streptococcus uberis (strain ATCC BAA-854 / 0140J).